Here is a 91-residue protein sequence, read N- to C-terminus: Small ribosomal subunit protein bS20 (91 aa).

Positions methionine 1–asparagine 18 are enriched in basic and acidic residues. Residues methionine 1–lysine 26 are disordered.

Belongs to the bacterial ribosomal protein bS20 family.

Functionally, binds directly to 16S ribosomal RNA. In Pelodictyon phaeoclathratiforme (strain DSM 5477 / BU-1), this protein is Small ribosomal subunit protein bS20.